Consider the following 321-residue polypeptide: Peroxidase 28 (321 aa).

The N-terminal stretch at 1-21 is a signal peptide; sequence MKIATFSVLLLLLFIFPVALA. 4 disulfide bridges follow: cysteine 32/cysteine 111, cysteine 65/cysteine 70, cysteine 117/cysteine 317, and cysteine 196/cysteine 228. The active-site Proton acceptor is the histidine 63. Positions 64, 67, 69, 71, and 73 each coordinate Ca(2+). Proline 159 lines the substrate pocket. Residue histidine 189 coordinates heme b. Threonine 190 lines the Ca(2+) pocket. Positions 238, 244, and 249 each coordinate Ca(2+).

This sequence belongs to the peroxidase family. Classical plant (class III) peroxidase subfamily. The cofactor is heme b. Ca(2+) is required as a cofactor.

Its subcellular location is the secreted. It catalyses the reaction 2 a phenolic donor + H2O2 = 2 a phenolic radical donor + 2 H2O. In terms of biological role, removal of H(2)O(2), oxidation of toxic reductants, biosynthesis and degradation of lignin, suberization, auxin catabolism, response to environmental stresses such as wounding, pathogen attack and oxidative stress. These functions might be dependent on each isozyme/isoform in each plant tissue. This chain is Peroxidase 28 (PER28), found in Arabidopsis thaliana (Mouse-ear cress).